We begin with the raw amino-acid sequence, 273 residues long: DnaJ homolog subfamily C member 27 (273 aa).

Residues 23-30, 71-75, and 134-137 each bind GTP; these read GNAEVGKS, DMAGH, and NKVD. The J domain occupies 217–273; sequence DSWDMLGVKPGATREEVNKAYRKLAVLLHPDKCVAPGSEDAFKAVVNARTSLLKNIK.

The protein belongs to the small GTPase superfamily. Rab family.

It is found in the nucleus. Functionally, GTPase possibly involved in regulation of the MEK/ERK pathway. This Danio rerio (Zebrafish) protein is DnaJ homolog subfamily C member 27 (dnajc27).